Reading from the N-terminus, the 46-residue chain is Antimicrobial peptide eNAP-2 (46 aa).

Residues 12 to 46 (RPGRCPTVPPGTFGHCACLCTGDASEPKGQKCCSN) enclose the WAP domain.

Has antibiotic activity against several equine uterine pathogens; S.zooepidemicus, E.coli and P.aeruginosa. Highly efficient against S.zoopedemicus. Not active against K.pneumoniae. Selectively inactivates microbial serine proteases (subtilisin A and proteinase K) without inhibiting mammalian serine proteases (human neutrophil elastase, human cathepsin G and bovine pancreatic trypsin). The polypeptide is Antimicrobial peptide eNAP-2 (Equus caballus (Horse)).